A 148-amino-acid polypeptide reads, in one-letter code: Large ribosomal subunit protein bL9 (148 aa).

This sequence belongs to the bacterial ribosomal protein bL9 family.

Its function is as follows. Binds to the 23S rRNA. This chain is Large ribosomal subunit protein bL9, found in Aliarcobacter butzleri (strain RM4018) (Arcobacter butzleri).